We begin with the raw amino-acid sequence, 475 residues long: Glycogen synthase (475 aa).

Lys-15 is an ADP-alpha-D-glucose binding site.

It belongs to the glycosyltransferase 1 family. Bacterial/plant glycogen synthase subfamily.

The enzyme catalyses [(1-&gt;4)-alpha-D-glucosyl](n) + ADP-alpha-D-glucose = [(1-&gt;4)-alpha-D-glucosyl](n+1) + ADP + H(+). It participates in glycan biosynthesis; glycogen biosynthesis. In terms of biological role, synthesizes alpha-1,4-glucan chains using ADP-glucose. This Chlamydia felis (strain Fe/C-56) (Chlamydophila felis) protein is Glycogen synthase.